Reading from the N-terminus, the 251-residue chain is Triosephosphate isomerase (251 aa).

9-11 contacts substrate; it reads NWK. The Electrophile role is filled by H96. Residue E167 is the Proton acceptor of the active site. Substrate-binding positions include G173, S213, and 234–235; that span reads GG.

This sequence belongs to the triosephosphate isomerase family. Homodimer.

The protein localises to the cytoplasm. It catalyses the reaction D-glyceraldehyde 3-phosphate = dihydroxyacetone phosphate. The protein operates within carbohydrate biosynthesis; gluconeogenesis. Its pathway is carbohydrate degradation; glycolysis; D-glyceraldehyde 3-phosphate from glycerone phosphate: step 1/1. Its function is as follows. Involved in the gluconeogenesis. Catalyzes stereospecifically the conversion of dihydroxyacetone phosphate (DHAP) to D-glyceraldehyde-3-phosphate (G3P). The chain is Triosephosphate isomerase from Phocaeicola vulgatus (strain ATCC 8482 / DSM 1447 / JCM 5826 / CCUG 4940 / NBRC 14291 / NCTC 11154) (Bacteroides vulgatus).